The primary structure comprises 329 residues: Phosphate acyltransferase (329 aa).

The protein belongs to the PlsX family. Homodimer. Probably interacts with PlsY.

It is found in the cytoplasm. It catalyses the reaction a fatty acyl-[ACP] + phosphate = an acyl phosphate + holo-[ACP]. It participates in lipid metabolism; phospholipid metabolism. Its function is as follows. Catalyzes the reversible formation of acyl-phosphate (acyl-PO(4)) from acyl-[acyl-carrier-protein] (acyl-ACP). This enzyme utilizes acyl-ACP as fatty acyl donor, but not acyl-CoA. The polypeptide is Phosphate acyltransferase (Sulfurovum sp. (strain NBC37-1)).